Here is a 484-residue protein sequence, read N- to C-terminus: Polyamine oxidase 3 (484 aa).

The FAD site is built by E47, R55, V236, and E423. The short motif at 482 to 484 (SRL) is the Microbody targeting signal element.

The protein belongs to the flavin monoamine oxidase family. Requires FAD as cofactor. In terms of tissue distribution, widely expressed.

The protein resides in the peroxisome. The enzyme catalyses spermine + O2 + H2O = 3-aminopropanal + spermidine + H2O2. It carries out the reaction N(1)-acetylspermine + O2 + H2O = 3-acetamidopropanal + spermidine + H2O2. The catalysed reaction is norspermine + O2 + H2O = norspermidine + 3-aminopropanal + H2O2. It catalyses the reaction spermidine + O2 + H2O = 3-aminopropanal + putrescine + H2O2. The enzyme catalyses thermospermine + O2 + H2O = 3-aminopropanal + spermidine + H2O2. It participates in amine and polyamine degradation; spermine degradation. It functions in the pathway amine and polyamine degradation; spermidine degradation. Its function is as follows. Flavoenzyme involved in polyamine back-conversion. Catalyzes the oxidation of the secondary amino group of polyamines, such as spermine, spermidine and their acetyl derivatives. Substrate preference is spermidine &gt; norspermine &gt; thermospermine &gt; N(1)-acetylspermine &gt; spermine. No activity detected when putrescine is used as substrate. Plays an important role in the regulation of polyamine intracellular concentration. This is Polyamine oxidase 3 from Oryza sativa subsp. japonica (Rice).